A 1167-amino-acid polypeptide reads, in one-letter code: Kinesin-like protein KIN-14M (1167 aa).

Positions 93-130 (PRKENDPGTQNSEGRRKIPKNPAMSEPSSPLSQTTLSS) are disordered. The span at 117-130 (SEPSSPLSQTTLSS) shows a compositional bias: low complexity. Coiled-coil stretches lie at residues 271-333 (VHQM…KEEM), 366-398 (AKYR…AMKS), and 432-489 (KQEL…ESRS). One can recognise a Kinesin motor domain in the interval 572-900 (NIRVHCRIRP…LKFADRVSGV (329 aa)). 656–663 (GQTGSGKT) is an ATP binding site. Positions 907-944 (ANKEGKDIKEFKEQLSLLKDKIAKKDEEISRLQLQSHN) form a coiled coil. Disordered regions lie at residues 955–974 (SLLK…SKIQ) and 1083–1167 (PDQD…KRWT). The span at 958 to 972 (KHSSSSPGISSLGSK) shows a compositional bias: low complexity. Composition is skewed to polar residues over residues 1113–1124 (ASRTTTPKTPQS) and 1151–1167 (TQAT…KRWT).

Belongs to the TRAFAC class myosin-kinesin ATPase superfamily. Kinesin family. KIN-14 subfamily.

In Oryza sativa subsp. japonica (Rice), this protein is Kinesin-like protein KIN-14M.